The following is a 74-amino-acid chain: U4-theraphotoxin-Cg1a (74 aa).

The signal sequence occupies residues 1 to 19 (MNATIFALLLLLNLAMHNA). Positions 20–39 (AEQSSETDMDDTLLIPEINR) are excised as a propeptide. Intrachain disulfides connect C42-C56, C49-C61, and C55-C71.

Belongs to the neurotoxin 36 family. 01 subfamily. As to expression, expressed by the venom gland.

The protein resides in the secreted. Its function is as follows. Probable ion channel inhibitor. This chain is U4-theraphotoxin-Cg1a, found in Chilobrachys guangxiensis (Chinese earth tiger tarantula).